Reading from the N-terminus, the 200-residue chain is Small ribosomal subunit protein uS4 (200 aa).

The segment at 22 to 43 is disordered; that stretch reads TGKELERRPYAPGQHGPTQRKK. The 79-residue stretch at 92–170 folds into the S4 RNA-binding domain; it reads QRLDNIVYRL…VPEYVTFDAE (79 aa).

Belongs to the universal ribosomal protein uS4 family. In terms of assembly, part of the 30S ribosomal subunit. Contacts protein S5. The interaction surface between S4 and S5 is involved in control of translational fidelity.

Functionally, one of the primary rRNA binding proteins, it binds directly to 16S rRNA where it nucleates assembly of the body of the 30S subunit. In terms of biological role, with S5 and S12 plays an important role in translational accuracy. The polypeptide is Small ribosomal subunit protein uS4 (Listeria monocytogenes serotype 4a (strain HCC23)).